The sequence spans 135 residues: MTMTDPIADMLSRVRNASNAFHDSVTMPSSKLKAHIAEILKQEGYIEDFAVNDRKDGKAGKELEITLKYGPTRERALAGVRRVSKPGLRVYTKSTNLPKVLGGLGVAIISTSHGLLTDREASNKGVGGEVLAYVW.

This sequence belongs to the universal ribosomal protein uS8 family. In terms of assembly, part of the 30S ribosomal subunit. Contacts proteins S5 and S12.

One of the primary rRNA binding proteins, it binds directly to 16S rRNA central domain where it helps coordinate assembly of the platform of the 30S subunit. The sequence is that of Small ribosomal subunit protein uS8 from Corynebacterium urealyticum (strain ATCC 43042 / DSM 7109).